The primary structure comprises 69 residues: DNA-directed RNA polymerase subunit epsilon (69 aa).

The protein belongs to the RNA polymerase subunit epsilon family. As to quaternary structure, RNAP is composed of a core of 2 alpha, a beta and a beta' subunit. The core is associated with a delta subunit, and at least one of epsilon or omega. When a sigma factor is associated with the core the holoenzyme is formed, which can initiate transcription.

It carries out the reaction RNA(n) + a ribonucleoside 5'-triphosphate = RNA(n+1) + diphosphate. Functionally, a non-essential component of RNA polymerase (RNAP). This is DNA-directed RNA polymerase subunit epsilon from Geobacillus sp. (strain WCH70).